Here is a 184-residue protein sequence, read N- to C-terminus: ATP synthase subunit b, chloroplastic (184 aa).

The helical transmembrane segment at 27 to 49 (LATNPINLSVVLGVLIFFGKGVL) threads the bilayer.

The protein belongs to the ATPase B chain family. As to quaternary structure, F-type ATPases have 2 components, F(1) - the catalytic core - and F(0) - the membrane proton channel. F(1) has five subunits: alpha(3), beta(3), gamma(1), delta(1), epsilon(1). F(0) has four main subunits: a(1), b(1), b'(1) and c(10-14). The alpha and beta chains form an alternating ring which encloses part of the gamma chain. F(1) is attached to F(0) by a central stalk formed by the gamma and epsilon chains, while a peripheral stalk is formed by the delta, b and b' chains.

It is found in the plastid. The protein localises to the chloroplast thylakoid membrane. F(1)F(0) ATP synthase produces ATP from ADP in the presence of a proton or sodium gradient. F-type ATPases consist of two structural domains, F(1) containing the extramembraneous catalytic core and F(0) containing the membrane proton channel, linked together by a central stalk and a peripheral stalk. During catalysis, ATP synthesis in the catalytic domain of F(1) is coupled via a rotary mechanism of the central stalk subunits to proton translocation. In terms of biological role, component of the F(0) channel, it forms part of the peripheral stalk, linking F(1) to F(0). The chain is ATP synthase subunit b, chloroplastic from Cucumis sativus (Cucumber).